A 1560-amino-acid chain; its full sequence is Tenascin-N (1560 aa).

A signal peptide spans 1 to 26; sequence MGLWGMLAFPLGFLLASVLLVASAPA. 3 consecutive EGF-like domains span residues 167–198, 199–229, and 230–260; these read DQPT…VDCA, YAAC…EDCS, and EQRC…PDCS. 9 cysteine pairs are disulfide-bonded: Cys-171–Cys-181, Cys-175–Cys-186, Cys-188–Cys-197, Cys-202–Cys-212, Cys-206–Cys-217, Cys-219–Cys-228, Cys-233–Cys-243, Cys-237–Cys-248, and Cys-250–Cys-259. Fibronectin type-III domains follow at residues 264-353, 354-444, 445-532, 533-622, 623-706, 709-798, 799-882, 885-970, 973-1062, 1063-1144, 1149-1238, and 1239-1325; these read APQG…DLAV, VGTA…TEID, GPTN…TEID, SPEN…IDSP, KNLV…APTD, GPKN…IDSP, GPKN…APTD, SPKN…IDSP, KNLV…TKAP, SPKN…IDPP, and RNLR…VDAR. Disordered regions lie at residues 868–888 and 1044–1063; these read GTQE…GPKN and GARE…DSPK. Basic and acidic residues predominate over residues 1044 to 1061; sequence GARESKKANTEGHTDIDS. The Fibrinogen C-terminal domain occupies 1323-1540; that stretch reads DARFPHPSDC…YVELKIRPFG (218 aa). N-linked (GlcNAc...) asparagine glycosylation occurs at Asn-1411.

Belongs to the tenascin family. Homohexamer. In terms of tissue distribution, highest expression in kidney followed by spleen and brain. In brain, highest expression is found in hippocampus, cerebellum and olfactory bulb. Expressed in aortic valve, corneal limbus. Expressed in ribs periosteum. During a fracture repair process, expression increases in cells of newly formed perichondrium/peristeum surrounding the cartalaginous callus.

It localises to the secreted. The protein resides in the extracellular space. Its subcellular location is the extracellular matrix. Functionally, extracellular matrix protein that seems to be a ligand for ITGA8:ITGB1, ITGAV:ITGB1 and ITGA4:ITGB1. Involved in neurite outgrowth and cell migration in hippocampal explants. During endochondral bone formation, inhibits proliferation and differentiation of proteoblasts mediated by canonical WNT signaling. In tumors, stimulates angiogenesis by elongation, migration and sprouting of endothelial cells. Expressed in most mammary tumors, may facilitate tumorigenesis by supporting the migratory behavior of breast cancer cells. The polypeptide is Tenascin-N (Mus musculus (Mouse)).